A 577-amino-acid chain; its full sequence is Arginine--tRNA ligase (577 aa).

The 'HIGH' region signature appears at 122–132; sequence PNVAKEMHVGH.

Belongs to the class-I aminoacyl-tRNA synthetase family. As to quaternary structure, monomer.

The protein localises to the cytoplasm. The enzyme catalyses tRNA(Arg) + L-arginine + ATP = L-arginyl-tRNA(Arg) + AMP + diphosphate. The sequence is that of Arginine--tRNA ligase from Escherichia fergusonii (strain ATCC 35469 / DSM 13698 / CCUG 18766 / IAM 14443 / JCM 21226 / LMG 7866 / NBRC 102419 / NCTC 12128 / CDC 0568-73).